A 156-amino-acid chain; its full sequence is 6,7-dimethyl-8-ribityllumazine synthase (156 aa).

5-amino-6-(D-ribitylamino)uracil contacts are provided by residues Phe23, 57–59 (AYE), and 81–83 (AII). Position 86–87 (86–87 (GT)) interacts with (2S)-2-hydroxy-3-oxobutyl phosphate. The active-site Proton donor is the His89. Position 114 (Phe114) interacts with 5-amino-6-(D-ribitylamino)uracil. Arg128 provides a ligand contact to (2S)-2-hydroxy-3-oxobutyl phosphate.

Belongs to the DMRL synthase family.

It carries out the reaction (2S)-2-hydroxy-3-oxobutyl phosphate + 5-amino-6-(D-ribitylamino)uracil = 6,7-dimethyl-8-(1-D-ribityl)lumazine + phosphate + 2 H2O + H(+). It functions in the pathway cofactor biosynthesis; riboflavin biosynthesis; riboflavin from 2-hydroxy-3-oxobutyl phosphate and 5-amino-6-(D-ribitylamino)uracil: step 1/2. Its function is as follows. Catalyzes the formation of 6,7-dimethyl-8-ribityllumazine by condensation of 5-amino-6-(D-ribitylamino)uracil with 3,4-dihydroxy-2-butanone 4-phosphate. This is the penultimate step in the biosynthesis of riboflavin. In Helicobacter pylori (strain P12), this protein is 6,7-dimethyl-8-ribityllumazine synthase.